Here is a 265-residue protein sequence, read N- to C-terminus: Undecaprenyl-diphosphatase (265 aa).

A run of 8 helical transmembrane segments spans residues 7–27, 45–65, 86–106, 108–128, 145–165, 186–206, 214–234, and 245–265; these read IIVS…PISS, TKIL…YFFH, LHII…YKKI, LLFN…FLLI, ISLL…YPGF, IEFS…YDFI, ILDL…SILC, and TSLI…YFIN.

Belongs to the UppP family.

The protein resides in the cell membrane. It carries out the reaction di-trans,octa-cis-undecaprenyl diphosphate + H2O = di-trans,octa-cis-undecaprenyl phosphate + phosphate + H(+). Catalyzes the dephosphorylation of undecaprenyl diphosphate (UPP). Confers resistance to bacitracin. In Buchnera aphidicola subsp. Acyrthosiphon pisum (strain Tuc7), this protein is Undecaprenyl-diphosphatase.